The primary structure comprises 275 residues: Formamidopyrimidine-DNA glycosylase (275 aa).

Residue P2 is the Schiff-base intermediate with DNA of the active site. E3 (proton donor) is an active-site residue. Catalysis depends on K58, which acts as the Proton donor; for beta-elimination activity. DNA contacts are provided by H91 and R110. The segment at 238 to 272 (QVYGQTGKSCPRCGQAIVKLKVGGRGTHICPKCQK) adopts an FPG-type zinc-finger fold. The Proton donor; for delta-elimination activity role is filled by R262.

This sequence belongs to the FPG family. In terms of assembly, monomer. Zn(2+) is required as a cofactor.

The enzyme catalyses Hydrolysis of DNA containing ring-opened 7-methylguanine residues, releasing 2,6-diamino-4-hydroxy-5-(N-methyl)formamidopyrimidine.. The catalysed reaction is 2'-deoxyribonucleotide-(2'-deoxyribose 5'-phosphate)-2'-deoxyribonucleotide-DNA = a 3'-end 2'-deoxyribonucleotide-(2,3-dehydro-2,3-deoxyribose 5'-phosphate)-DNA + a 5'-end 5'-phospho-2'-deoxyribonucleoside-DNA + H(+). Functionally, involved in base excision repair of DNA damaged by oxidation or by mutagenic agents. Acts as a DNA glycosylase that recognizes and removes damaged bases. Has a preference for oxidized purines, such as 7,8-dihydro-8-oxoguanine (8-oxoG). Has AP (apurinic/apyrimidinic) lyase activity and introduces nicks in the DNA strand. Cleaves the DNA backbone by beta-delta elimination to generate a single-strand break at the site of the removed base with both 3'- and 5'-phosphates. The polypeptide is Formamidopyrimidine-DNA glycosylase (Streptococcus pyogenes serotype M3 (strain ATCC BAA-595 / MGAS315)).